We begin with the raw amino-acid sequence, 438 residues long: 23S rRNA (uracil(1939)-C(5))-methyltransferase RlmD (438 aa).

One can recognise a TRAM domain in the interval 11-69; the sequence is LQPESKHQQVLVEKLDHQGAGIAYLNKKPLFIDGTLPGEEVVTQLTESKSKFARGKLIK. Positions 82, 88, 91, and 169 each coordinate [4Fe-4S] cluster. S-adenosyl-L-methionine contacts are provided by glutamine 272, phenylalanine 301, asparagine 306, glutamate 322, asparagine 349, and aspartate 370. Residue cysteine 396 is the Nucleophile of the active site.

Belongs to the class I-like SAM-binding methyltransferase superfamily. RNA M5U methyltransferase family. RlmD subfamily.

It carries out the reaction uridine(1939) in 23S rRNA + S-adenosyl-L-methionine = 5-methyluridine(1939) in 23S rRNA + S-adenosyl-L-homocysteine + H(+). Catalyzes the formation of 5-methyl-uridine at position 1939 (m5U1939) in 23S rRNA. This Vibrio vulnificus (strain CMCP6) protein is 23S rRNA (uracil(1939)-C(5))-methyltransferase RlmD.